The primary structure comprises 70 residues: Protein SlyX homolog (70 aa).

This sequence belongs to the SlyX family.

This is Protein SlyX homolog from Shewanella sediminis (strain HAW-EB3).